A 169-amino-acid polypeptide reads, in one-letter code: MAQHKINYTQNGGLPVALTSIDKIVNWGRSNSLWAMTYGLACCGIEMMASGASRYDFDRFGTIFRASPRQSDVMIVAGTLTKKHAEFIKRLYDQMTEPKWVISMGSCANTGGMFNTYATVQGVDRIIPVDLYLPGCAPRPETLQYGVMLLQKKIRANKASRAQVAKRLM.

4 residues coordinate [4Fe-4S] cluster: Cys42, Cys43, Cys107, and Cys136.

It belongs to the complex I 20 kDa subunit family. NDH-1 is composed of 14 different subunits. Subunits NuoB, C, D, E, F, and G constitute the peripheral sector of the complex. It depends on [4Fe-4S] cluster as a cofactor.

Its subcellular location is the cell inner membrane. The catalysed reaction is a quinone + NADH + 5 H(+)(in) = a quinol + NAD(+) + 4 H(+)(out). NDH-1 shuttles electrons from NADH, via FMN and iron-sulfur (Fe-S) centers, to quinones in the respiratory chain. The immediate electron acceptor for the enzyme in this species is believed to be ubiquinone. Couples the redox reaction to proton translocation (for every two electrons transferred, four hydrogen ions are translocated across the cytoplasmic membrane), and thus conserves the redox energy in a proton gradient. The polypeptide is NADH-quinone oxidoreductase subunit B (Sulfurimonas denitrificans (strain ATCC 33889 / DSM 1251) (Thiomicrospira denitrificans (strain ATCC 33889 / DSM 1251))).